The following is a 371-amino-acid chain: Solute carrier family 35 member F6 (371 aa).

Positions 1 to 18 are cleaved as a signal peptide; sequence MAWTKYQLFLAGLMLVTG. The next 2 membrane-spanning stretches (helical) occupy residues 48 to 68 and 89 to 109; these read FLQA…FYLL and LLFL…YVAL. The EamA domain maps to 104-160; that stretch reads LMYVALNMTSASSFQMLRGAVIIFTGLFSVAFLGRRLVLSQWLGILATIAGLVVVGL. Residue N110 is glycosylated (N-linked (GlcNAc...) asparagine). The next 7 helical transmembrane spans lie at 117–137, 140–160, 176–196, 216–236, 261–281, 295–312, and 317–336; these read FQML…AFLG, LVLS…VVGL, VITG…QMVL, GLFG…IPAG, LIAV…FAGI, LDSL…ALGW, and ALQI…YNGL. A disordered region spans residues 352–371; the sequence is EESEQERLLGGTRTPINDAS. At T365 the chain carries Phosphothreonine.

Belongs to the SLC35F solute transporter family. In terms of assembly, interacts with SLC25A5. In terms of tissue distribution, expressed in pancreatic ductal adenocarcinoma (PDAC) (at protein level). Strongly expressed in prostate and thyroid. Weakly expressed in lung, heart, liver and kidney.

Its subcellular location is the mitochondrion. The protein resides in the lysosome membrane. Involved in the maintenance of mitochondrial membrane potential in pancreatic ductal adenocarcinoma (PDAC) cells. Promotes pancreatic ductal adenocarcinoma (PDAC) cell growth. May play a role as a nucleotide-sugar transporter. The sequence is that of Solute carrier family 35 member F6 (SLC35F6) from Homo sapiens (Human).